The chain runs to 81 residues: Photosystem I iron-sulfur center (81 aa).

4Fe-4S ferredoxin-type domains follow at residues 2–31 and 39–68; these read AHSV…MIPW and IASA…VRVY. [4Fe-4S] cluster contacts are provided by Cys11, Cys14, Cys17, Cys21, Cys48, Cys51, Cys54, and Cys58.

In terms of assembly, the eukaryotic PSI reaction center is composed of at least 11 subunits. It depends on [4Fe-4S] cluster as a cofactor.

It localises to the plastid. Its subcellular location is the chloroplast thylakoid membrane. The enzyme catalyses reduced [plastocyanin] + hnu + oxidized [2Fe-2S]-[ferredoxin] = oxidized [plastocyanin] + reduced [2Fe-2S]-[ferredoxin]. In terms of biological role, apoprotein for the two 4Fe-4S centers FA and FB of photosystem I (PSI); essential for photochemical activity. FB is the terminal electron acceptor of PSI, donating electrons to ferredoxin. The C-terminus interacts with PsaA/B/D and helps assemble the protein into the PSI complex. Required for binding of PsaD and PsaE to PSI. PSI is a plastocyanin-ferredoxin oxidoreductase, converting photonic excitation into a charge separation, which transfers an electron from the donor P700 chlorophyll pair to the spectroscopically characterized acceptors A0, A1, FX, FA and FB in turn. The protein is Photosystem I iron-sulfur center of Adiantum capillus-veneris (Maidenhair fern).